The primary structure comprises 443 residues: tRNA modification GTPase MnmE (443 aa).

The (6S)-5-formyl-5,6,7,8-tetrahydrofolate site is built by Arg-19, Glu-78, and Lys-118. Positions 214-366 (GFKIAIIGPT…LISKIKNKLK (153 aa)) constitute a TrmE-type G domain. Asn-224 lines the K(+) pocket. GTP contacts are provided by residues 224 to 229 (NAGKSS), 243 to 249 (SEIAGTT), and 268 to 271 (DTAG). Residue Ser-228 participates in Mg(2+) binding. Ser-243, Ile-245, and Thr-248 together coordinate K(+). Thr-249 contacts Mg(2+). A (6S)-5-formyl-5,6,7,8-tetrahydrofolate-binding site is contributed by Lys-443.

This sequence belongs to the TRAFAC class TrmE-Era-EngA-EngB-Septin-like GTPase superfamily. TrmE GTPase family. Homodimer. Heterotetramer of two MnmE and two MnmG subunits. K(+) serves as cofactor.

The protein resides in the cytoplasm. In terms of biological role, exhibits a very high intrinsic GTPase hydrolysis rate. Involved in the addition of a carboxymethylaminomethyl (cmnm) group at the wobble position (U34) of certain tRNAs, forming tRNA-cmnm(5)s(2)U34. The protein is tRNA modification GTPase MnmE of Pelagibacter ubique (strain HTCC1062).